The sequence spans 435 residues: Apparent malate synthase (435 aa).

E159 and N180 together coordinate Mg(2+). E159 contributes to the substrate binding site.

Belongs to the HpcH/HpaI aldolase family. Mg(2+) is required as a cofactor. Mn(2+) serves as cofactor. It depends on Co(2+) as a cofactor. The cofactor is Ca(2+).

It carries out the reaction (S)-malyl-CoA = glyoxylate + acetyl-CoA. It catalyses the reaction (S)-malyl-CoA + H2O = (S)-malate + CoA + H(+). Involved in the methylaspartate cycle. Catalyzes the biosynthesis of malate in two steps. In the first reaction acetyl-CoA is condensed reversibly with glyoxylate to form (S)-malyl-CoA. In the second reaction (S)-malyl-CoA is hydrolyzed to malate and CoA. It can also catalyze the condensation of propionyl-CoA with glyoxylate and of acetyl-CoA with pyruvate, however the CoA-ester hydrolysis reaction is highly specific for (S)-malyl-CoA. The protein is Apparent malate synthase (aceB) of Haloarcula marismortui (strain ATCC 43049 / DSM 3752 / JCM 8966 / VKM B-1809) (Halobacterium marismortui).